Consider the following 223-residue polypeptide: Cytochrome c biogenesis ATP-binding export protein CcmA (223 aa).

An ABC transporter domain is found at Met1–Tyr223. ATP is bound at residue Gly31–Thr38.

It belongs to the ABC transporter superfamily. CcmA exporter (TC 3.A.1.107) family. The complex is composed of two ATP-binding proteins (CcmA) and two transmembrane proteins (CcmB).

Its subcellular location is the cell inner membrane. The catalysed reaction is heme b(in) + ATP + H2O = heme b(out) + ADP + phosphate + H(+). Part of the ABC transporter complex CcmAB involved in the biogenesis of c-type cytochromes; once thought to export heme, this seems not to be the case, but its exact role is uncertain. Responsible for energy coupling to the transport system. This Saccharophagus degradans (strain 2-40 / ATCC 43961 / DSM 17024) protein is Cytochrome c biogenesis ATP-binding export protein CcmA.